Reading from the N-terminus, the 112-residue chain is Na(+)/H(+) antiporter subunit C (112 aa).

The next 3 helical transmembrane spans lie at 4–21 (LMSI…YLIL), 28–50 (VVVG…AGLQ), and 70–92 (QALI…VLAY).

The protein belongs to the CPA3 antiporters (TC 2.A.63) subunit C family. Forms a heterooligomeric complex that consists of seven subunits: MrpA, MrpB, MrpC, MrpD, MrpE, MrpF and MrpG.

The protein resides in the cell membrane. Its function is as follows. Mnh complex is a Na(+)Li(+)/H(+) antiporter involved in Na(+) and/or Li(+) excretion and Na(+) resistance. Na(+)/H(+) antiport consumes a transmembrane electrical potential, and is thus inferred to be electrogenic. Does not transport K(+), Ca(2+) or Mg(2+). In Alkalihalophilus pseudofirmus (strain ATCC BAA-2126 / JCM 17055 / OF4) (Bacillus pseudofirmus), this protein is Na(+)/H(+) antiporter subunit C (mrpC).